The chain runs to 732 residues: Catalase-peroxidase (732 aa).

Residues 1-26 are disordered; that stretch reads MDAKTDDQGGKCPFPHGGGSRGHRNR. Positions 97–219 form a cross-link, tryptophyl-tyrosyl-methioninium (Trp-Tyr) (with M-245); it reads WHSAGTYRTT…LGAVQMGLIY (123 aa). The active-site Proton acceptor is the H98. Positions 219-245 form a cross-link, tryptophyl-tyrosyl-methioninium (Tyr-Met) (with W-97); that stretch reads YVNPEGPNGNPDPVAAAKDIRETFARM. H260 is a heme b binding site.

This sequence belongs to the peroxidase family. Peroxidase/catalase subfamily. Homodimer or homotetramer. Heme b is required as a cofactor. Post-translationally, formation of the three residue Trp-Tyr-Met cross-link is important for the catalase, but not the peroxidase activity of the enzyme.

It catalyses the reaction H2O2 + AH2 = A + 2 H2O. It carries out the reaction 2 H2O2 = O2 + 2 H2O. Bifunctional enzyme with both catalase and broad-spectrum peroxidase activity. In Rhodopseudomonas palustris (strain BisB5), this protein is Catalase-peroxidase.